We begin with the raw amino-acid sequence, 175 residues long: Methylated-DNA--protein-cysteine methyltransferase (175 aa).

The active-site Nucleophile; methyl group acceptor is the Cys142.

This sequence belongs to the MGMT family.

The protein resides in the cytoplasm. It catalyses the reaction a 6-O-methyl-2'-deoxyguanosine in DNA + L-cysteinyl-[protein] = S-methyl-L-cysteinyl-[protein] + a 2'-deoxyguanosine in DNA. The catalysed reaction is a 4-O-methyl-thymidine in DNA + L-cysteinyl-[protein] = a thymidine in DNA + S-methyl-L-cysteinyl-[protein]. Its function is as follows. Involved in the cellular defense against the biological effects of O6-methylguanine (O6-MeG) and O4-methylthymine (O4-MeT) in DNA. Repairs the methylated nucleobase in DNA by stoichiometrically transferring the methyl group to a cysteine residue in the enzyme. This is a suicide reaction: the enzyme is irreversibly inactivated. The protein is Methylated-DNA--protein-cysteine methyltransferase of Thermococcus barophilus (strain DSM 11836 / MP).